A 252-amino-acid polypeptide reads, in one-letter code: Protein IRON-RELATED TRANSCRIPTION FACTOR 3 (252 aa).

Positions 36-49 (PRKVHKSEREKLKR) are basic motif. In terms of domain architecture, bHLH spans 36-86 (PRKVHKSEREKLKRGHLNDLFGELGNMLEADRQSNGKACILTDTTRILRDL). Residues 50–86 (GHLNDLFGELGNMLEADRQSNGKACILTDTTRILRDL) form a helix-loop-helix motif region. The stretch at 76 to 131 (LTDTTRILRDLLSQVKSLRQENSTLQNESNYVTMERNELQDENGALRSEISDLQNE) forms a coiled coil. Positions 135 to 252 (RATGSPGWGH…GLPRMEDEQM (118 aa)) are disordered. Positions 162 to 176 (PSQQPMQPSPMTTST) are enriched in low complexity. Residues 208 to 219 (PAEDPEPSEDQE) are compositionally biased toward acidic residues.

The protein belongs to the bHLH protein family.

Its subcellular location is the nucleus. Functionally, transcription factor that acts as a negative regulator of the iron deficiency response. Suppresses the induction of iron deficiency responsive genes, such as NAS1, NAS2, IRO2, IRT1, YSL15, and NRAMP1. The protein is Protein IRON-RELATED TRANSCRIPTION FACTOR 3 of Oryza sativa subsp. japonica (Rice).